We begin with the raw amino-acid sequence, 262 residues long: uncharacterized protein (262 aa).

Helical transmembrane passes span 42 to 62 (IAKF…TVLN), 71 to 91 (IINI…LLYF), 115 to 135 (IGLA…MELI), 145 to 165 (VVSY…CCFN), 185 to 205 (LWAY…YSNH), 206 to 226 (PLMI…PFMI), and 235 to 255 (AYPS…NYAI).

It localises to the membrane. This is an uncharacterized protein from Acanthamoeba polyphaga mimivirus (APMV).